Consider the following 704-residue polypeptide: MQNSPTTEQTKNIVAERIQELRQLIAHNNRLYYENIPPRREIHDYEYDELFKELQELESRFPEFQSADSPTQIVGGSVSEGFKKVQHSVPMLSIENKPVTKMLSEVRSIIKELKDDAISIDIVAEPKIDGLSCSIRYEKHQLVRAATRGDGLEGEDITVNVHSISEIPKILPLDAPEVIEIRGEVYMSNSDFKQYTAQQNKIGEKPPENPRNAAAGSLRQLDPSVTASRPLRFFAYAWGEISNSFAKSQWDALQTLRGWGFKVCDDIRLLYSSDELNSYFEEMQERRSELDFTIDGIVYKLNSLSLQERVGQTNRAPRWAAAQKFPPEKRETLLQNITISVGRSGALTPVAELLPVRLLGTTVSNATLHNQDEVECKDFRIDDTIVVQRAGDVIPQVVSVVIEKRLSGSIPFVFPSACPVCGSKAVREPREAVWKCTGGLTCPAQSLERLKHFVSRDAFNIDGLGEKNIELFYNKGLLASPVDIFRLEEILSPPLLWQQKPSEFKPLQEWDGWGELSANNLFRAIRTKQKITLYRFIYALGIPKVGEVTAKILADNYVSLDNWQSSMLKAAERESECYQHLISIDGIGSVVADEIVSFFAEAHNIQVLDSLKNYLSVEDFTKPAIISSNISGKIVVFTGELEKRSRKAAKIEAEKFGAKVATDVSRKTDIVIAGTDPGSKLRKAQELGIKILSEDEWEHLINEK.

NAD(+) contacts are provided by residues 44-48 (DYEYD), 93-94 (SI), and Glu125. Catalysis depends on Lys127, which acts as the N6-AMP-lysine intermediate. Arg148, Glu184, Lys300, and Lys324 together coordinate NAD(+). Cys418, Cys421, Cys436, and Cys442 together coordinate Zn(2+). The BRCT domain maps to 625 to 704 (IISSNISGKI…DEWEHLINEK (80 aa)).

Belongs to the NAD-dependent DNA ligase family. LigA subfamily. The cofactor is Mg(2+). Requires Mn(2+) as cofactor.

The enzyme catalyses NAD(+) + (deoxyribonucleotide)n-3'-hydroxyl + 5'-phospho-(deoxyribonucleotide)m = (deoxyribonucleotide)n+m + AMP + beta-nicotinamide D-nucleotide.. Functionally, DNA ligase that catalyzes the formation of phosphodiester linkages between 5'-phosphoryl and 3'-hydroxyl groups in double-stranded DNA using NAD as a coenzyme and as the energy source for the reaction. It is essential for DNA replication and repair of damaged DNA. In Pelobacter propionicus (strain DSM 2379 / NBRC 103807 / OttBd1), this protein is DNA ligase.